The following is a 277-amino-acid chain: uncharacterized protein (277 aa).

3 Solcar repeats span residues 1 to 84 (MDQA…SKRV), 96 to 179 (ISVL…LKLW), and 184 to 268 (PTSL…VGMH). Helical transmembrane passes span 3 to 24 (QAIA…LDLA), 60 to 80 (LSIN…IYDF), 102 to 122 (LCSS…IWVV), 152 to 172 (CYAG…QFMA), 190 to 210 (IFMS…LLVI), and 240 to 261 (FYKG…TFLV).

It belongs to the mitochondrial carrier (TC 2.A.29) family.

It localises to the mitochondrion inner membrane. This is an uncharacterized protein from Schizosaccharomyces pombe (strain 972 / ATCC 24843) (Fission yeast).